Consider the following 591-residue polypeptide: Aspartate--tRNA(Asp/Asn) ligase (591 aa).

L-aspartate is bound at residue E174. The interval Q198–K201 is aspartate. Residue R220 participates in L-aspartate binding. Residues R220–E222 and Q229 each bind ATP. H450 lines the L-aspartate pocket. E483 provides a ligand contact to ATP. R490 provides a ligand contact to L-aspartate. Residue G535 to R538 participates in ATP binding.

The protein belongs to the class-II aminoacyl-tRNA synthetase family. Type 1 subfamily. As to quaternary structure, homodimer.

It is found in the cytoplasm. It carries out the reaction tRNA(Asx) + L-aspartate + ATP = L-aspartyl-tRNA(Asx) + AMP + diphosphate. In terms of biological role, aspartyl-tRNA synthetase with relaxed tRNA specificity since it is able to aspartylate not only its cognate tRNA(Asp) but also tRNA(Asn). Reaction proceeds in two steps: L-aspartate is first activated by ATP to form Asp-AMP and then transferred to the acceptor end of tRNA(Asp/Asn). This is Aspartate--tRNA(Asp/Asn) ligase from Pseudomonas fluorescens (strain ATCC BAA-477 / NRRL B-23932 / Pf-5).